The chain runs to 164 residues: uncharacterized protein (164 aa).

A disordered region spans residues 144–164; the sequence is GFISPEKEHESEDMTSQSLVA.

This is an uncharacterized protein from Synechocystis sp. (strain ATCC 27184 / PCC 6803 / Kazusa).